Here is a 101-residue protein sequence, read N- to C-terminus: Large ribosomal subunit protein bL21 (101 aa).

The protein belongs to the bacterial ribosomal protein bL21 family. In terms of assembly, part of the 50S ribosomal subunit. Contacts protein L20.

Functionally, this protein binds to 23S rRNA in the presence of protein L20. The chain is Large ribosomal subunit protein bL21 from Thermus thermophilus (strain ATCC BAA-163 / DSM 7039 / HB27).